The following is a 1063-amino-acid chain: Structural polyprotein (1063 aa).

The disordered stretch occupies residues 1–131 (MASTTPITME…LGPPTNPFQA (131 aa)). The segment at 30–69 (GASQPRRPRPPRQRDSSTSGDDSGRDSGGPRRRRGNRGRG) is human C1QBP/SF2P32-binding. The residue at position 46 (Ser-46) is a Phosphoserine; by host. Residues 59–69 (PRRRRGNRGRG) are compositionally biased toward basic residues. Positions 70–87 (QRKDWSRAPPPPEERQEG) are enriched in basic and acidic residues. Positions 93–107 (APKPSRAPPQQPQPP) are enriched in pro residues. Cys-153 and Cys-197 are joined by a disulfide. The functions as E2 signal peptide stretch occupies residues 279 to 300 (GAPQAFLAGLLLAAVAVGTARA). The Extracellular segment spans residues 301–534 (GLQPRVDMAA…LWLATANALS (234 aa)). 3 N-linked (GlcNAc...) asparagine; by host glycosylation sites follow: Asn-353, Asn-371, and Asn-429. Residues 535-555 (LDHALAAFVLLVPWVLIFMVC) traverse the membrane as a helical segment. At 556–582 (RRACRRRGAAAALTAVVLQGYNPPAYG) the chain is on the cytoplasmic side. The segment at 563 to 582 (GAAAALTAVVLQGYNPPAYG) is functions as E1 signal peptide. The Extracellular portion of the chain corresponds to 583 to 1028 (EEAFTYLCTA…QTWAEWAAAH (446 aa)). 8 disulfide bridges follow: Cys-590–Cys-595, Cys-619–Cys-824, Cys-641–Cys-653, Cys-699–Cys-712, Cys-758–Cys-767, Cys-807–Cys-817, Cys-931–Cys-934, and Cys-950–Cys-983. A glycan (N-linked (GlcNAc...) asparagine; by host) is linked at Asn-658. Ca(2+) contacts are provided by Asn-670 and Ala-671. Asp-718 and Thr-719 together coordinate Ca(2+). The N-linked (GlcNAc...) asparagine; by host glycan is linked to Asn-791. O-linked (GalNAc...) threonine; by host glycans are attached at residues Thr-1011 and Thr-1012. A helical transmembrane segment spans residues 1029–1049 (WWQLTLGAICALPLAGLLACC). Topologically, residues 1050–1063 (AKCLYYLRGAIAPR) are extracellular.

Homodimer; further assembles into homooligomer. Interacts with human C1QBP. Interacts (via N-terminus) with protease/methyltransferase p150. As to quaternary structure, heterodimer with spike glycoprotein E2. In terms of assembly, heterodimer with spike glycoprotein E1. Post-translationally, structural polyprotein: Specific enzymatic cleavages in vivo yield mature proteins. Two signal peptidase-mediated cleavages within the polyprotein produce the structural proteins capsid, E2, and E1. The E2 signal peptide remains attached to the C-terminus of the capsid protein after cleavage by the signal peptidase. Another signal peptide at E2 C-terminus directs E1 to the ER, with a similar mechanism. Contains three N-linked oligosaccharides. In terms of processing, capsid is phosphorylated on Ser-46 by host. This phosphorylation negatively regulates capsid protein RNA-binding activity. Dephosphorylated by human PP1A.

It localises to the virion. It is found in the host cytoplasm. The protein localises to the host mitochondrion. The protein resides in the virion membrane. Its subcellular location is the host Golgi apparatus membrane. Capsid protein interacts with genomic RNA and assembles into icosahedric core particles 65-70 nm in diameter. The resulting nucleocapsid eventually associates with the cytoplasmic domain of E2 at the cell membrane, leading to budding and formation of mature virions from host Golgi membranes. Phosphorylation negatively regulates RNA-binding activity, possibly delaying virion assembly during the viral replication phase. Capsid protein dimerizes and becomes disulfide-linked in the virion. Modulates genomic RNA replication. Modulates subgenomic RNA synthesis by interacting with human C1QBP/SF2P32. Induces both perinuclear clustering of mitochondria and the formation of electron-dense intermitochondrial plaques, both hallmarks of rubella virus infected cells. Induces apoptosis when expressed in transfected cells. Its function is as follows. Responsible for viral attachment to target host cell, by binding to the cell receptor. Its transport to the plasma membrane depends on interaction with E1 protein. The surface glycoproteins display an irregular helical organization and a pseudo-tetrameric inner nucleocapsid arrangement. Functionally, class II viral fusion protein. Fusion activity is inactive as long as E1 is bound to E2 in mature virion. After virus attachment to target cell and clathrin-mediated endocytosis, acidification of the endosome would induce dissociation of E1/E2 heterodimer and concomitant trimerization of the E1 subunits. This E1 homotrimer is fusion active, and promotes release of viral nucleocapsid in cytoplasm after endosome and viral membrane fusion. The cytoplasmic tail of spike glycoprotein E1 modulates virus release. The surface glycoproteins display an irregular helical organization and a pseudo-tetrameric inner nucleocapsid arrangement. The polypeptide is Structural polyprotein (Rubella virus (strain Cendehill) (RUBV)).